The sequence spans 216 residues: Thiamine-phosphate synthase (216 aa).

4-amino-2-methyl-5-(diphosphooxymethyl)pyrimidine is bound by residues 37-41 (QVRSK) and aspartate 68. Mg(2+)-binding residues include aspartate 69 and aspartate 93. Position 112 (threonine 112) interacts with 4-amino-2-methyl-5-(diphosphooxymethyl)pyrimidine. 140–142 (TPT) serves as a coordination point for 2-[(2R,5Z)-2-carboxy-4-methylthiazol-5(2H)-ylidene]ethyl phosphate. Residue lysine 143 participates in 4-amino-2-methyl-5-(diphosphooxymethyl)pyrimidine binding.

The protein belongs to the thiamine-phosphate synthase family. It depends on Mg(2+) as a cofactor.

The enzyme catalyses 2-[(2R,5Z)-2-carboxy-4-methylthiazol-5(2H)-ylidene]ethyl phosphate + 4-amino-2-methyl-5-(diphosphooxymethyl)pyrimidine + 2 H(+) = thiamine phosphate + CO2 + diphosphate. It carries out the reaction 2-(2-carboxy-4-methylthiazol-5-yl)ethyl phosphate + 4-amino-2-methyl-5-(diphosphooxymethyl)pyrimidine + 2 H(+) = thiamine phosphate + CO2 + diphosphate. The catalysed reaction is 4-methyl-5-(2-phosphooxyethyl)-thiazole + 4-amino-2-methyl-5-(diphosphooxymethyl)pyrimidine + H(+) = thiamine phosphate + diphosphate. The protein operates within cofactor biosynthesis; thiamine diphosphate biosynthesis; thiamine phosphate from 4-amino-2-methyl-5-diphosphomethylpyrimidine and 4-methyl-5-(2-phosphoethyl)-thiazole: step 1/1. Its function is as follows. Condenses 4-methyl-5-(beta-hydroxyethyl)thiazole monophosphate (THZ-P) and 2-methyl-4-amino-5-hydroxymethyl pyrimidine pyrophosphate (HMP-PP) to form thiamine monophosphate (TMP). The polypeptide is Thiamine-phosphate synthase (Corynebacterium efficiens (strain DSM 44549 / YS-314 / AJ 12310 / JCM 11189 / NBRC 100395)).